We begin with the raw amino-acid sequence, 469 residues long: 3-isopropylmalate dehydratase large subunit (469 aa).

[4Fe-4S] cluster is bound by residues cysteine 350, cysteine 410, and cysteine 413.

This sequence belongs to the aconitase/IPM isomerase family. LeuC type 1 subfamily. In terms of assembly, heterodimer of LeuC and LeuD. [4Fe-4S] cluster serves as cofactor.

The enzyme catalyses (2R,3S)-3-isopropylmalate = (2S)-2-isopropylmalate. The protein operates within amino-acid biosynthesis; L-leucine biosynthesis; L-leucine from 3-methyl-2-oxobutanoate: step 2/4. Catalyzes the isomerization between 2-isopropylmalate and 3-isopropylmalate, via the formation of 2-isopropylmaleate. The protein is 3-isopropylmalate dehydratase large subunit of Rhizobium leguminosarum bv. trifolii (strain WSM2304).